The sequence spans 195 residues: uncharacterized protein (195 aa).

2 helical membrane passes run 13–32 (VIGL…FLVA) and 42–64 (LSNS…TILV).

The protein localises to the cell membrane. This is an uncharacterized protein from Archaeoglobus fulgidus (strain ATCC 49558 / DSM 4304 / JCM 9628 / NBRC 100126 / VC-16).